Reading from the N-terminus, the 386-residue chain is Cell division protein FtsZ (386 aa).

Residues 18–22 (GGGVN), 105–107 (GTG), glutamate 136, arginine 140, and aspartate 184 each bind GTP.

This sequence belongs to the FtsZ family. In terms of assembly, homodimer. Polymerizes to form a dynamic ring structure in a strictly GTP-dependent manner. Interacts directly with several other division proteins.

It localises to the cytoplasm. Its function is as follows. Essential cell division protein that forms a contractile ring structure (Z ring) at the future cell division site. The regulation of the ring assembly controls the timing and the location of cell division. One of the functions of the FtsZ ring is to recruit other cell division proteins to the septum to produce a new cell wall between the dividing cells. Binds GTP and shows GTPase activity. The polypeptide is Cell division protein FtsZ (Mycobacterium kansasii).